The primary structure comprises 200 residues: Glutathione S-transferase domain-containing protein DDB_G0273153/DDB_G0273923 (200 aa).

The GST N-terminal domain occupies methionine 1 to glycine 71. The 123-residue stretch at serine 73–serine 195 folds into the GST C-terminal domain.

The protein belongs to the GST superfamily.

The sequence is that of Glutathione S-transferase domain-containing protein DDB_G0273153/DDB_G0273923 from Dictyostelium discoideum (Social amoeba).